The sequence spans 1724 residues: Protein mono-ADP-ribosyltransferase PARP4 (1724 aa).

One can recognise a BRCT domain in the interval 1–94 (MVMGIFANCI…RLLDVKNYDP (94 aa)). Positions 19–25 (PQQQKKK) match the Nuclear localization signal motif. The tract at residues 97-123 (PLDITPPPDQKASSSEVKTEGLCPDSA) is disordered. Phosphothreonine is present on residues threonine 101 and threonine 333. The PARP alpha-helical domain maps to 242–370 (SEQLQALLLE…ETNLSKPNPP (129 aa)). Residues 369-573 (PPSLAKYRAL…FSMPGDQIKD (205 aa)) enclose the PARP catalytic domain. The region spanning 607-735 (SSTKAGLQDA…KVLIKITYIT (129 aa)) is the VIT domain. Residues 876–1046 (EVIICLDCSS…KQIEDQMTRL (171 aa)) form the VWFA domain. Phosphoserine is present on serine 1236. Residues 1237–1249 (KRKHRKIPFSKRK) carry the Nuclear localization signal motif. Serine 1335 is modified (phosphoserine). The tract at residues 1408–1452 (SAQSAPLQHPGGFTTRPSAGTFPELDSPQLHFSLPTDPDPIRGFG) is disordered. Position 1476 is an asymmetric dimethylarginine (arginine 1476). Serine 1504 is modified (phosphoserine). The segment at 1562-1724 (VCIQHWQDAV…LHRVLHYSQG (163 aa)) is interaction with the major vault protein.

This sequence belongs to the ARTD/PARP family. As to quaternary structure, component of the vault ribonucleoprotein particle, at least composed of MVP, PARP4 and one or more vault RNAs (vRNAs). Interacts with TEP1. In terms of tissue distribution, widely expressed; the highest levels are in the kidney; also detected in heart, placenta, lung, liver, skeletal muscle, spleen, leukocytes and pancreas.

Its subcellular location is the cytoplasm. The protein localises to the nucleus. It localises to the cytoskeleton. It is found in the spindle. The catalysed reaction is L-aspartyl-[protein] + NAD(+) = 4-O-(ADP-D-ribosyl)-L-aspartyl-[protein] + nicotinamide. The enzyme catalyses L-glutamyl-[protein] + NAD(+) = 5-O-(ADP-D-ribosyl)-L-glutamyl-[protein] + nicotinamide. Mono-ADP-ribosyltransferase that mediates mono-ADP-ribosylation of target proteins. This is Protein mono-ADP-ribosyltransferase PARP4 from Homo sapiens (Human).